A 215-amino-acid chain; its full sequence is MOB kinase activator-like 1B (215 aa).

Positions 1–29 (MSLFGLGSRNQKTFRPKKSAPTGSKGAQL) are disordered. Cys80, Cys85, His162, and His167 together coordinate Zn(2+).

The protein belongs to the MOB1/phocein family. In terms of tissue distribution, constitutively expressed with higher expression in roots, flowers and pods than in leaves and stems.

The protein resides in the cytoplasm. It localises to the cytoskeleton. Its subcellular location is the phragmoplast. In Medicago sativa subsp. falcata (Sickle medic), this protein is MOB kinase activator-like 1B.